The primary structure comprises 113 residues: Large ribosomal subunit protein bL19 (113 aa).

This sequence belongs to the bacterial ribosomal protein bL19 family.

In terms of biological role, this protein is located at the 30S-50S ribosomal subunit interface and may play a role in the structure and function of the aminoacyl-tRNA binding site. The polypeptide is Large ribosomal subunit protein bL19 (Mycolicibacterium gilvum (strain PYR-GCK) (Mycobacterium gilvum (strain PYR-GCK))).